Here is a 507-residue protein sequence, read N- to C-terminus: ATP synthase subunit alpha, chloroplastic (507 aa).

Residue 170–177 (GDRQTGKT) coordinates ATP. The residue at position 257 (threonine 257) is a Phosphothreonine.

The protein belongs to the ATPase alpha/beta chains family. In terms of assembly, F-type ATPases have 2 components, CF(1) - the catalytic core - and CF(0) - the membrane proton channel. CF(1) has five subunits: alpha(3), beta(3), gamma(1), delta(1), epsilon(1). CF(0) has four main subunits: a, b, b' and c.

Its subcellular location is the plastid. It is found in the chloroplast thylakoid membrane. The catalysed reaction is ATP + H2O + 4 H(+)(in) = ADP + phosphate + 5 H(+)(out). Its function is as follows. Produces ATP from ADP in the presence of a proton gradient across the membrane. The alpha chain is a regulatory subunit. The protein is ATP synthase subunit alpha, chloroplastic of Aethionema cordifolium (Lebanon stonecress).